A 375-amino-acid chain; its full sequence is Odorant receptor 49b (375 aa).

Over 1–28 (MFEDIQLIYMNIKILRFWALLYDKNLRR) the chain is Cytoplasmic. Residues 29-49 (YVCIGLASFHIFTQIVYMMST) traverse the membrane as a helical segment. The Extracellular segment spans residues 50–60 (NEGLTGIIRNS). A helical membrane pass occupies residues 61-77 (YMLVLWINTVLRAYLLL). At 78–121 (ADHDRYLALIQKLTEAYYDLLNLNDSYISEILDQVNKVGKLMAR) the chain is on the cytoplasmic side. Residues 122 to 142 (GNLFFGMLTSMGFGLYPLSSS) form a helical membrane-spanning segment. The Extracellular portion of the chain corresponds to 143-176 (ERVLPFGSKIPGLNEYESPYYEMWYIFQMLITPM). A helical transmembrane segment spans residues 177-197 (GCCMYIPYTSLIVGLIMFGIV). Topologically, residues 198–251 (RCKALQHRLRQVALKHPYGDRDPRELREEIIACIRYQQSIIEYMDHINELTTMM) are cytoplasmic. Residues 252-272 (FLFELMAFSALLCALLFMLII) traverse the membrane as a helical segment. Residues 273–278 (VSGTSQ) are Extracellular-facing. A helical transmembrane segment spans residues 279–299 (LIIVCMYINMILAQILALYWY). Over 300–342 (ANELREQNLAVATAAYETEWFTFDVPLRKNILFMMMRAQRPAA) the chain is Cytoplasmic. The helical transmembrane segment at 343–363 (ILLGNIRPITLELFQNLLNTT) threads the bilayer. At 364–375 (YTFFTVLKRVYG) the chain is on the extracellular side.

The protein belongs to the insect chemoreceptor superfamily. Heteromeric odorant receptor channel (TC 1.A.69) family. Or30a subfamily. Interacts with Orco. Complexes exist early in the endomembrane system in olfactory sensory neurons (OSNs), coupling these complexes to the conserved ciliary trafficking pathway. Expressed in olfactory sensory neurons in the antenna.

It is found in the cell membrane. Its function is as follows. Odorant receptor which mediates acceptance or avoidance behavior, depending on its substrates. The odorant receptor repertoire encodes a large collection of odor stimuli that vary widely in identity, intensity, and duration. May form a complex with Orco to form odorant-sensing units, providing sensitive and prolonged odorant signaling and calcium permeability. This is Odorant receptor 49b (Or49b) from Drosophila melanogaster (Fruit fly).